We begin with the raw amino-acid sequence, 1262 residues long: MRGGSSLDSFPGKGTLHTLEIENFKSYKGKHTIGPFTRFTAIIGPNGSGKSNLMDAISFVLGEKPSSLRVRKYADLIHGAPINKPVAKKCRVTMNYKYSDGKVKAFTRGVNNGTSEHLLDGQTVTSAAYSQEMESINIFIKARNFLVYQGAIENIAMKTPKERTQLFEELSRSHEFQAEYERLKVEMTKAEDDTQHNMNKRRGIAQEKREAKMEKDEAEKYQTMKNELAAKSTMLFLHQLFHCERTIDESKEEINAQKKTIASLEATRSKEEAKIAAVHQEHRKALREVQKMTRKLDQKETDLAEKQQNMLTLKVSVAHEHKKLEIAKKMLAAAESKAENNSTQLADLKKSKKELEKKKAAYEAEIQDMMQRGELNLSDEQVREYGQLKDQAQRESAMVQRELLMAEQVFEGDKSSLNHELRRQKEHQERVKAKEGDVRRIETQIATLAQRIKETEEETKILKADLKKIENDVVIDKSAAAEYNKELVAVVRQLSEASGDSAEGERNQRRTEALEGLKKNFPESVYGRLVDLCQPSHKRFNIATTKILQKHMNSIVCDTEETAAKAIVYLKDHRYPPETFLPNDALVVNPLNEKLREIKKPAGVKLVFDVINPQHQAARKALQFVCGNALVCESQEDAKQLAYGGGELKDRFKAVSMDGTLFQQSGVMSGGSADLRQKSKKWDEKVVKQLREKRNQLNEKIADLQKHRRRELEVESVRSKINGNEQRLAMMKRDLKNMREMQLERLQNELEGMTAEMNMLPPRISNCQEKLERSESTLKSLQTKSNEVADRIFADFCTRVGIASIRDYENREMRIKQEMEDKLRSFDDDIQKLAYEIDFVTEQDGNRKVEVEKEKVSQIDRQYKDMKKKEKTAAAALKEHTESMEQDKEVLEEKKALSHKLETEWNEVKKIAQVAMKDFTKAEKELLRLESLLTKKQYERHSLLHSVKLGQIALPLKSGSMADVEYEEDDGDDTASQSSQSATDGPSVSEEQIQREQHIKINYDSLPREYKDVDDDDGVRQMSNRLNVEIDELQKNVSKMNAPNLKANQRMAEVKEREAESTEELENARKKAKRIRQQFEKVKTDRYRRFQDFFDPVANTIDDIYKQLSRNTSAQAFLGADNMEEPYLDGIQYNCVAPGKRFRPMDNLSGGEKTIAALALLFAVHGRNPAPFFVLDEIDAALDNTNIGKVASYICESAREHMQIIVISLKEEFYNKADSLIGIFPYPAACTTSGVLTFDLTRFKQIGLNEMTENPPTPSIAT.

Positions 171–497 (SRSHEFQAEY…VAVVRQLSEA (327 aa)) form a coiled coil. One can recognise an SMC hinge domain in the interval 524 to 642 (SVYGRLVDLC…ESQEDAKQLA (119 aa)). Residues 680 to 937 (KKWDEKVVKQ…RLESLLTKKQ (258 aa)) are a coiled coil. The interval 965–994 (EYEEDDGDDTASQSSQSATDGPSVSEEQIQ) is disordered. Polar residues predominate over residues 974-991 (TASQSSQSATDGPSVSEE). Residues 1017–1086 (DGVRQMSNRL…QQFEKVKTDR (70 aa)) are a coiled coil. A DA-box motif is present at residues 1148 to 1183 (LSGGEKTIAALALLFAVHGRNPAPFFVLDEIDAALD).

Belongs to the SMC family. SMC1 subfamily. In terms of assembly, component of the cohesin complex, composed of the smc-1 and smc-3 heterodimer attached via their SMC hinge domain, scc-1 which links them, and scc-3. Interacts with smc-3, scc-1, scc-3 and tim-1.

The protein resides in the nucleus. It is found in the chromosome. In terms of biological role, involved in chromosome cohesion during cell cycle and in DNA repair. Required for chromosome segregation during mitosis. Central component of cohesin complex. The cohesin complex is required for the cohesion of sister chromatids after DNA replication. The cohesin complex apparently forms a large proteinaceous ring within which sister chromatids can be trapped. At anaphase, the complex is cleaved and dissociates from chromatin, allowing sister chromatids to segregate. This chain is Structural maintenance of chromosomes protein 1, found in Caenorhabditis elegans.